The following is a 399-amino-acid chain: Zona occludens toxin (399 aa).

Its function is as follows. Increases the permeability of the small intestine mucosa by affecting the structure of intercellular tight junctions (zonula occludens). The protein is Zona occludens toxin (zot) of Vibrio cholerae serotype O1 (strain ATCC 39315 / El Tor Inaba N16961).